The following is a 345-amino-acid chain: Probable aldo-keto reductase 4 (345 aa).

Tyrosine 63 acts as the Proton donor in catalysis. Histidine 130 is a binding site for substrate. 209–219 lines the NADP(+) pocket; the sequence is SPLGRGFFASG.

Belongs to the aldo/keto reductase family.

The sequence is that of Probable aldo-keto reductase 4 from Arabidopsis thaliana (Mouse-ear cress).